The chain runs to 537 residues: Chaperonin GroEL 2 (537 aa).

Residues 29-32 (TLGP), 86-90 (DGTTT), G413, 477-479 (NAA), and D493 contribute to the ATP site.

The protein belongs to the chaperonin (HSP60) family. As to quaternary structure, forms a cylinder of 14 subunits composed of two heptameric rings stacked back-to-back. Interacts with the co-chaperonin GroES.

It is found in the cytoplasm. The catalysed reaction is ATP + H2O + a folded polypeptide = ADP + phosphate + an unfolded polypeptide.. In terms of biological role, together with its co-chaperonin GroES, plays an essential role in assisting protein folding. The GroEL-GroES system forms a nano-cage that allows encapsulation of the non-native substrate proteins and provides a physical environment optimized to promote and accelerate protein folding. This is Chaperonin GroEL 2 from Rhodococcus jostii (strain RHA1).